A 501-amino-acid polypeptide reads, in one-letter code: Cytochrome P450 7A1 (501 aa).

Residues 4-24 form a helical membrane-spanning segment; sequence IFWIWGICLSVCCCLWLILGL. Cys441 contacts heme.

Belongs to the cytochrome P450 family. Heme is required as a cofactor. In terms of tissue distribution, detected in liver.

It localises to the endoplasmic reticulum membrane. The protein localises to the microsome membrane. The catalysed reaction is cholesterol + reduced [NADPH--hemoprotein reductase] + O2 = 7alpha-hydroxycholesterol + oxidized [NADPH--hemoprotein reductase] + H2O + H(+). It carries out the reaction 4beta-hydroxycholesterol + reduced [NADPH--hemoprotein reductase] + O2 = 4beta,7alpha-dihydroxycholesterol + oxidized [NADPH--hemoprotein reductase] + H2O + H(+). The enzyme catalyses lathosterol + reduced [NADPH--hemoprotein reductase] + O2 = 7alpha,8alpha-epoxy-5alpha-cholestan-3beta-ol + oxidized [NADPH--hemoprotein reductase] + H2O + H(+). It catalyses the reaction lathosterol + reduced [NADPH--hemoprotein reductase] + O2 = 5alpha-cholestan-7-oxo-3beta-ol + oxidized [NADPH--hemoprotein reductase] + H2O + H(+). The catalysed reaction is 7-dehydrocholesterol + reduced [NADPH--hemoprotein reductase] + O2 = 7-oxocholesterol + oxidized [NADPH--hemoprotein reductase] + H2O + H(+). It carries out the reaction (24S)-hydroxycholesterol + reduced [NADPH--hemoprotein reductase] + O2 = (24S)-7alpha-dihydroxycholesterol + oxidized [NADPH--hemoprotein reductase] + H2O + H(+). The enzyme catalyses (24R)-hydroxycholesterol + reduced [NADPH--hemoprotein reductase] + O2 = (24R)-7alpha-dihydroxycholesterol + oxidized [NADPH--hemoprotein reductase] + H2O + H(+). The protein operates within lipid metabolism; bile acid biosynthesis. It participates in steroid metabolism; cholesterol degradation. Functionally, a cytochrome P450 monooxygenase involved in the metabolism of endogenous cholesterol and its oxygenated derivatives (oxysterols). Mechanistically, uses molecular oxygen inserting one oxygen atom into a substrate, and reducing the second into a water molecule, with two electrons provided by NADPH via cytochrome P450 reductase (CPR; NADPH-ferrihemoprotein reductase). Functions as a critical regulatory enzyme of bile acid biosynthesis and cholesterol homeostasis. Catalyzes the hydroxylation of carbon hydrogen bond at 7-alpha position of cholesterol, a rate-limiting step in cholesterol catabolism and bile acid biosynthesis. 7-alpha hydroxylates several oxysterols, including 4beta-hydroxycholesterol and 24-hydroxycholesterol. Catalyzes the oxidation of the 7,8 double bond of 7-dehydrocholesterol and lathosterol with direct and predominant formation of the 7-keto derivatives. In Oryctolagus cuniculus (Rabbit), this protein is Cytochrome P450 7A1 (CYP7A1).